The sequence spans 274 residues: Coat protein (274 aa).

The interval 88 to 112 is disordered; the sequence is RPAKQVLKGSSSKSQQRDEGEVVFT. A compositionally biased stretch (basic and acidic residues) spans 102–112; sequence QQRDEGEVVFT.

The protein resides in the virion. This chain is Coat protein, found in Rubus idaeus (Raspberry).